The chain runs to 247 residues: MTDSIQDLLSIKLARAIANPLFPEVDSQLRSGKHIGQEYLDNYSFLADFQHELDSFYRRYNVELIRAPEGFFYLRPKATTLIARSVLSELEMLVGKVLCYLYLSPERLAQQGIFTVQEVHDELINLADETKLLKAINLRAGGSDLDKQKLAEKVRSAISRLRRLGMIHAVGDQHSGKFTISESVFRFGAEVRSGDDPLEAQLRLIREGEAATAQSLQEEKNGLKDNMDQSAVENEQYFENEENEGIA.

The segment at 213–247 (AQSLQEEKNGLKDNMDQSAVENEQYFENEENEGIA) is disordered. A compositionally biased stretch (basic and acidic residues) spans 217 to 227 (QEEKNGLKDNM). Over residues 236–247 (QYFENEENEGIA) the composition is skewed to acidic residues.

The protein belongs to the MukE family. As to quaternary structure, interacts, and probably forms a ternary complex, with MukF and MukB. The complex formation is stimulated by calcium or magnesium.

It is found in the cytoplasm. It localises to the nucleoid. Functionally, involved in chromosome condensation, segregation and cell cycle progression. May participate in facilitating chromosome segregation by condensation DNA from both sides of a centrally located replisome during cell division. Probably acts via its interaction with MukB and MukF. This chain is Chromosome partition protein MukE, found in Histophilus somni (strain 2336) (Haemophilus somnus).